The chain runs to 427 residues: tRNA(Ile)-lysidine synthase (427 aa).

18-23 (SGGLDS) provides a ligand contact to ATP.

It belongs to the tRNA(Ile)-lysidine synthase family.

It localises to the cytoplasm. It carries out the reaction cytidine(34) in tRNA(Ile2) + L-lysine + ATP = lysidine(34) in tRNA(Ile2) + AMP + diphosphate + H(+). Functionally, ligates lysine onto the cytidine present at position 34 of the AUA codon-specific tRNA(Ile) that contains the anticodon CAU, in an ATP-dependent manner. Cytidine is converted to lysidine, thus changing the amino acid specificity of the tRNA from methionine to isoleucine. This Pseudomonas putida (strain ATCC 47054 / DSM 6125 / CFBP 8728 / NCIMB 11950 / KT2440) protein is tRNA(Ile)-lysidine synthase.